The chain runs to 311 residues: Ribose-phosphate pyrophosphokinase (311 aa).

ATP is bound by residues 37 to 39 (DGE) and 96 to 97 (RQ). Mg(2+) is bound by residues histidine 130 and aspartate 170. Lysine 193 is an active-site residue. D-ribose 5-phosphate contacts are provided by residues arginine 195, aspartate 219, and 223 to 227 (DTAGT).

The protein belongs to the ribose-phosphate pyrophosphokinase family. Class I subfamily. Homohexamer. Mg(2+) is required as a cofactor.

It localises to the cytoplasm. The enzyme catalyses D-ribose 5-phosphate + ATP = 5-phospho-alpha-D-ribose 1-diphosphate + AMP + H(+). The protein operates within metabolic intermediate biosynthesis; 5-phospho-alpha-D-ribose 1-diphosphate biosynthesis; 5-phospho-alpha-D-ribose 1-diphosphate from D-ribose 5-phosphate (route I): step 1/1. Involved in the biosynthesis of the central metabolite phospho-alpha-D-ribosyl-1-pyrophosphate (PRPP) via the transfer of pyrophosphoryl group from ATP to 1-hydroxyl of ribose-5-phosphate (Rib-5-P). The sequence is that of Ribose-phosphate pyrophosphokinase from Aquifex aeolicus (strain VF5).